Here is a 689-residue protein sequence, read N- to C-terminus: DNA-directed RNA polymerase subunit beta' (689 aa).

Residues cysteine 69, cysteine 71, cysteine 87, and cysteine 90 each coordinate Zn(2+). 3 residues coordinate Mg(2+): aspartate 489, aspartate 491, and aspartate 493.

The protein belongs to the RNA polymerase beta' chain family. RpoC1 subfamily. In terms of assembly, in plastids the minimal PEP RNA polymerase catalytic core is composed of four subunits: alpha, beta, beta', and beta''. When a (nuclear-encoded) sigma factor is associated with the core the holoenzyme is formed, which can initiate transcription. The cofactor is Mg(2+). Zn(2+) is required as a cofactor.

It localises to the plastid. It is found in the chloroplast. The catalysed reaction is RNA(n) + a ribonucleoside 5'-triphosphate = RNA(n+1) + diphosphate. In terms of biological role, DNA-dependent RNA polymerase catalyzes the transcription of DNA into RNA using the four ribonucleoside triphosphates as substrates. This chain is DNA-directed RNA polymerase subunit beta', found in Helianthus annuus (Common sunflower).